Here is a 1143-residue protein sequence, read N- to C-terminus: Condensin-2 complex subunit G2 (1143 aa).

Serine 30 carries the phosphoserine modification. The HEAT repeat unit spans residues 460 to 498; sequence LLPALRYSLHDNSEKVRVAFVDMLLKIKAVRAAKFWKIC. Phosphothreonine is present on residues threonine 805 and threonine 1119.

Component of the condensin-2 complex, which contains the SMC2 and SMC4 heterodimer, and 3 non SMC subunits that probably regulate the complex: NCAPH2, NCAPD3 and NCAPG2.

It is found in the nucleus. In terms of biological role, regulatory subunit of the condensin-2 complex, a complex which establishes mitotic chromosome architecture and is involved in physical rigidity of the chromatid axis. The sequence is that of Condensin-2 complex subunit G2 (NCAPG2) from Homo sapiens (Human).